The primary structure comprises 176 residues: Large ribosomal subunit protein uL22z (176 aa).

The span at 154–163 shows a compositional bias: basic and acidic residues; that stretch reads KEEPVKKEPE. The disordered stretch occupies residues 154–176; that stretch reads KEEPVKKEPETQLAAKSKKGASS.

It belongs to the universal ribosomal protein uL22 family.

This Arabidopsis thaliana (Mouse-ear cress) protein is Large ribosomal subunit protein uL22z (RPL17A).